The chain runs to 887 residues: Phosphatidylinositol 3-kinase catalytic subunit type 3 (887 aa).

The C2 PI3K-type domain maps to 35–184 (YKAVLEDPML…LAKLTKAHRQ (150 aa)). The segment at 150-170 (EADGSEPTKTPGRTSSTLSED) is disordered. Polar residues predominate over residues 156–170 (PTKTPGRTSSTLSED). Phosphothreonine; by AMPK is present on Thr-163. Residue Ser-165 is modified to Phosphoserine; by AMPK. Ser-244, Ser-261, and Ser-282 each carry phosphoserine. The region spanning 282 to 520 (SDHGLKPNAA…PKTHEMYLNV (239 aa)) is the PIK helical domain. Disordered regions lie at residues 416–435 (EPTK…NSGI) and 446–468 (ITSP…SSDG). Over residues 423–435 (QGSVSESVSNSGI) the composition is skewed to low complexity. A compositionally biased stretch (pro residues) spans 449–459 (PLPPVSSPPPA). The PI3K/PI4K catalytic domain maps to 605-871 (IPETATLFKS…LIDESVHALF (267 aa)). Residues 611–617 (LFKSALM) are G-loop. The interval 740–748 (GVGDRHLDN) is catalytic loop. Residues 759 to 780 (HIDFGYILGRDPKPLPPPMKLN) are activation loop.

It belongs to the PI3/PI4-kinase family. Component of the PI3K (PI3KC3/PI3K-III/class III phosphatidylinositol 3-kinase) complex the core of which is composed of the catalytic subunit PIK3C3, the regulatory subunit PIK3R4 and BECN1 associating with additional regulatory/auxiliary subunits to form alternative complex forms. Alternative complex forms containing a fourth regulatory subunit in a mutually exclusive manner are: the PI3K complex I (PI3KC3-C1) containing ATG14, and the PI3K complex II (PI3KC3-C2) containing UVRAG. PI3KC3-C1 displays a V-shaped architecture with PIK3R4 serving as a bridge between PIK3C3 and the ATG14:BECN1 subcomplex. Both, PI3KC3-C1 and PI3KC3-C2, can associate with further regulatory subunits such as RUBCN, SH3GLB1/Bif-1 and AMBRA1. PI3KC3-C1 probably associates with PIK3CB. Interacts with RAB7A in the presence of PIK3R4. Interacts with AMBRA1. Interacts with BECN1P1/BECN2. Interacts with SLAMF1. May be a component of a complex composed of RAB5A (in GDP-bound form), DYN2 and PIK3C3. Interacts with NCKAP1L. Interacts with ATG14; this interaction is increased in the absence of TMEM39A. Interacts with STEEP1; the interaction is STING1-dependent and required for trafficking of STING1 from the endoplasmic reticulum. Interacts with YWHAG. Interacts with ARMC3. Mn(2+) serves as cofactor. Ubiquitinated via 'Lys-29'- and 'Lys-48'-linked ubiquitination by UBE3C, promoting its degradation. Deubiquitination by ZRANB1/TRABID promotes its stabilization, leading to autophagosome maturation.

It localises to the midbody. Its subcellular location is the late endosome. The protein resides in the cytoplasmic vesicle. It is found in the autophagosome. The enzyme catalyses a 1,2-diacyl-sn-glycero-3-phospho-(1D-myo-inositol) + ATP = a 1,2-diacyl-sn-glycero-3-phospho-(1D-myo-inositol-3-phosphate) + ADP + H(+). Functionally, catalytic subunit of the PI3K complex that mediates formation of phosphatidylinositol 3-phosphate; different complex forms are believed to play a role in multiple membrane trafficking pathways: PI3KC3-C1 is involved in initiation of autophagosomes and PI3KC3-C2 in maturation of autophagosomes and endocytosis. As part of PI3KC3-C1, promotes endoplasmic reticulum membrane curvature formation prior to vesicle budding. Involved in regulation of degradative endocytic trafficking and required for the abscission step in cytokinesis, probably in the context of PI3KC3-C2. Involved in the transport of lysosomal enzyme precursors to lysosomes. Required for transport from early to late endosomes. The chain is Phosphatidylinositol 3-kinase catalytic subunit type 3 from Sus scrofa (Pig).